The primary structure comprises 463 residues: ATP synthase subunit beta (463 aa).

Residue Gly-152–Thr-159 coordinates ATP.

Belongs to the ATPase alpha/beta chains family. In terms of assembly, F-type ATPases have 2 components, CF(1) - the catalytic core - and CF(0) - the membrane proton channel. CF(1) has five subunits: alpha(3), beta(3), gamma(1), delta(1), epsilon(1). CF(0) has three main subunits: a(1), b(2) and c(9-12). The alpha and beta chains form an alternating ring which encloses part of the gamma chain. CF(1) is attached to CF(0) by a central stalk formed by the gamma and epsilon chains, while a peripheral stalk is formed by the delta and b chains.

It is found in the cell membrane. The enzyme catalyses ATP + H2O + 4 H(+)(in) = ADP + phosphate + 5 H(+)(out). Produces ATP from ADP in the presence of a proton gradient across the membrane. The catalytic sites are hosted primarily by the beta subunits. This Clostridium botulinum (strain Alaska E43 / Type E3) protein is ATP synthase subunit beta.